The chain runs to 236 residues: Mitochondrial inner membrane protease ATP23 (236 aa).

H136 provides a ligand contact to a divalent metal cation. E137 is a catalytic residue. Position 140 (H140) interacts with a divalent metal cation.

The protein belongs to the peptidase M76 family.

The protein resides in the mitochondrion inner membrane. Functionally, has a dual role in the assembly of mitochondrial ATPase. Acts as a protease that removes N-terminal residues of mitochondrial ATPase CF(0) subunit 6 at the intermembrane space side. Also involved in the correct assembly of the membrane-embedded ATPase CF(0) particle, probably mediating association of subunit 6 with the subunit 9 ring. The protein is Mitochondrial inner membrane protease ATP23 (ATP23) of Debaryomyces hansenii (strain ATCC 36239 / CBS 767 / BCRC 21394 / JCM 1990 / NBRC 0083 / IGC 2968) (Yeast).